A 1097-amino-acid polypeptide reads, in one-letter code: MALHLHRAERTDLLADGLGALLADPQPDPFAQELVLVAARGVERWLSQRLSLVLGCGPGRADGVCAGIAFRNPQSLIAEITGTLDDDPWSPEALAWPLLAVIDASLDEPWCRTLASHLGHFATTDAEAELRRGRRYSVARRLAGLFASYARQRPGLLAAWLDGDLGELPGDLAWQPPLWRALVTTVGADPPHVRHDKTIARLRDGPADLPARLSLFGHTRLACTDVQLLDALAVHHDLHLWLPHPSDELWRALAGFQGADGLLPRRQDTSRRAAQHPLLETLGRDVRELQRALPAARATDEFLGATTKPDTLLGWLQADIAGNAPRPAGRSLSDADRSVQVHACHGPARQIDVLREVLLGLLEDDPTLQPRDIVVMCPDIDTYAPLIVAGFGLGEVAGDCHPAHRLRVRLADRALTQTNPLLSVAAELLTIAETRATASQLLNLAQAAPVRAKFGFADDDLDTITTWVRESNIRWGFDPTHRRRYGLDTVVHNTWRLGLDRILTGVAMSEDSQAWLDTALPLDDVGSNRVELAGRLAEFVERLHHVVGGLSGARPLVAWLDALATGIDLLTACNDGWQRAQVQREFADVLARAGSRAAPLLRLPDVRALLDAQLAGRPTRANFRTGTLTVCTMVPMRSVPHRVVCLVGLDDGVFPRLSHPDGDDVLAREPMTGERDIRSEDRQLLLDAIGAATQTLVITYTGADERTGQPRPPAVPLAELLDALDQTTSAPVRERILVTHPLQPFDRKNVTPGALLGAKPFTFDPAALAAAQAAAGKRCPPTAFISGRLPAPPAADVTLADLLDFFKDPVKGFFRALDYTLPWDVDTVEDSIPVQVDALAEWTVGERMLRDMLRGLHPDDAAHSEWRRGTLPPGRLGVRRAKEIRNRARDLAAAALAHRDGHGQAHDVDVDLGDGRRLSGTVTPVFGGRTVSVTYSKLAPKHVLPAWIGLVTLAAQEPGREWSALCIGRSKTRNHIARRLFVPPPDPVAVLRELVLLYDAGRREPLPLPLKTSCAWAQARRDGQDPYPPARECWQTNRFRPGDDDAPAHVRAWGPRAPFEVLLGKPRAGEEVAGEETRLGALAARLWLPLLAAEGSV.

It belongs to the RecC family. As to quaternary structure, heterotrimer of RecB, RecC and RecD. All subunits contribute to DNA-binding.

Functionally, a helicase/nuclease that prepares dsDNA breaks (DSB) for recombinational DNA repair. Binds to DSBs and unwinds DNA via a highly rapid and processive ATP-dependent bidirectional helicase activity. Holoenzyme degrades any linearized DNA that is unable to undergo homologous recombination. In the holoenzyme this subunit recognizes the wild-type Chi sequence, and when added to isolated RecB increases its ATP-dependent helicase processivity. Unlike the case in E.coli, suppresses RecA-dependent homologous recombination, is instead required for single-strand annealing pathway repair of DSB. This chain is RecBCD enzyme subunit RecC, found in Mycobacterium tuberculosis (strain CDC 1551 / Oshkosh).